A 232-amino-acid chain; its full sequence is MAGAWSSNCCRGSSTGCMCCNKGKRNDSLLLGKRLSEDSSRQQLLQKWESMWSSTSGDASEGDTEKERLEEAAVAEEKPLVFLCSGCRRPLGDSLSWVTNQEDTNCILLRSVSCNVSVDKEQKLSKREKENGCILETLYCAGCSLNLGYVYRCTPRDLDSKRDLFCLSVEAIESYILGSAEKQIVSEDKELFNLESRVEIEKSLKQMEDVLKALHMKLWEVESKLSFAGSKS.

A phosphoserine mark is found at serine 36, serine 39, and serine 40. A Mis18 domain is found at 79-177; it reads PLVFLCSGCR…SVEAIESYIL (99 aa). Cysteine 84, cysteine 87, cysteine 140, and cysteine 143 together coordinate Zn(2+). A Glycyl lysine isopeptide (Lys-Gly) (interchain with G-Cter in SUMO2) cross-link involves residue lysine 161. At serine 232 the chain carries Phosphoserine.

This sequence belongs to the mis18 family. In terms of assembly, homodimer, and heterodimer with OIP5/MIS18B. Identified in a complex containing MIS18A, OIP5/MIS18B, MIS18BP1, RBBP7 and RBBP4.

It is found in the nucleus. Its subcellular location is the chromosome. It localises to the centromere. Its function is as follows. Required for recruitment of CENPA to centromeres and normal chromosome segregation during mitosis. This Otolemur garnettii (Small-eared galago) protein is Protein Mis18-alpha (MIS18A).